A 126-amino-acid polypeptide reads, in one-letter code: Large ribosomal subunit protein bL12 (126 aa).

Belongs to the bacterial ribosomal protein bL12 family. As to quaternary structure, homodimer. Part of the ribosomal stalk of the 50S ribosomal subunit. Forms a multimeric L10(L12)X complex, where L10 forms an elongated spine to which 2 to 4 L12 dimers bind in a sequential fashion. Binds GTP-bound translation factors.

Forms part of the ribosomal stalk which helps the ribosome interact with GTP-bound translation factors. Is thus essential for accurate translation. This Bifidobacterium longum subsp. infantis (strain ATCC 15697 / DSM 20088 / JCM 1222 / NCTC 11817 / S12) protein is Large ribosomal subunit protein bL12.